We begin with the raw amino-acid sequence, 268 residues long: Hydroxyethylthiazole kinase (268 aa).

Methionine 45 lines the substrate pocket. ATP contacts are provided by arginine 121 and threonine 167. Glycine 194 lines the substrate pocket.

The protein belongs to the Thz kinase family. Requires Mg(2+) as cofactor.

It catalyses the reaction 5-(2-hydroxyethyl)-4-methylthiazole + ATP = 4-methyl-5-(2-phosphooxyethyl)-thiazole + ADP + H(+). It functions in the pathway cofactor biosynthesis; thiamine diphosphate biosynthesis; 4-methyl-5-(2-phosphoethyl)-thiazole from 5-(2-hydroxyethyl)-4-methylthiazole: step 1/1. In terms of biological role, catalyzes the phosphorylation of the hydroxyl group of 4-methyl-5-beta-hydroxyethylthiazole (THZ). This is Hydroxyethylthiazole kinase from Bacillus cereus (strain Q1).